The primary structure comprises 510 residues: Beta-glucosidase 40 (510 aa).

The signal sequence occupies residues 1 to 29; it reads MAHRRLIMTMTKMMMMVTMMMMMDKTCIC. Residues Gln-51, His-152, and 197–198 contribute to the a beta-D-glucoside site; that span reads NE. Catalysis depends on Glu-198, which acts as the Proton donor. Residues Cys-217 and Cys-225 are joined by a disulfide bond. N-linked (GlcNAc...) asparagine glycosylation is found at Asn-229 and Asn-278. Tyr-341 lines the a beta-D-glucoside pocket. A glycan (N-linked (GlcNAc...) asparagine) is linked at Asn-349. Residues Glu-414, Trp-464, 471–472, and Phe-480 contribute to the a beta-D-glucoside site; that span reads EW. The Nucleophile role is filled by Glu-414. N-linked (GlcNAc...) asparagine glycosylation is present at Asn-507.

The protein belongs to the glycosyl hydrolase 1 family.

It catalyses the reaction Hydrolysis of terminal, non-reducing beta-D-glucosyl residues with release of beta-D-glucose.. This is Beta-glucosidase 40 from Arabidopsis thaliana (Mouse-ear cress).